The chain runs to 277 residues: Zinc finger protein 511 (277 aa).

C2H2-type zinc fingers lie at residues 96-121 (FRCH…NALH), 123-146 (NVCS…LEWH), and 160-185 (YECL…IRTH). A disordered region spans residues 225-244 (ESSESMDFSLTPEPVETEPM).

This sequence belongs to the krueppel C2H2-type zinc-finger protein family.

It localises to the nucleus. Functionally, may be involved in transcriptional regulation. The chain is Zinc finger protein 511 (znf511) from Danio rerio (Zebrafish).